Consider the following 98-residue polypeptide: MSVRGKAGKGLGKGGAKCHRKVLSDNIQGITKCTIRRLARHGGVKRILGLIYEETRRVFKVFLENVIWYAVTNTEHAKRKTVTAMAVVYVLKRQGRTL.

The DNA-binding element occupies Lys17 to Lys21.

This sequence belongs to the histone H4 family. The nucleosome is a histone octamer containing two molecules each of H2A, H2B, H3 and H4 assembled in one H3-H4 heterotetramer and two H2A-H2B heterodimers. The octamer wraps approximately 147 bp of DNA.

Its subcellular location is the nucleus. The protein resides in the chromosome. Functionally, core component of nucleosome. Nucleosomes wrap and compact DNA into chromatin, limiting DNA accessibility to the cellular machineries which require DNA as a template. Histones thereby play a central role in transcription regulation, DNA repair, DNA replication and chromosomal stability. DNA accessibility is regulated via a complex set of post-translational modifications of histones, also called histone code, and nucleosome remodeling. This Homo sapiens (Human) protein is Histone H4-like protein type G.